Consider the following 153-residue polypeptide: Small ribosomal subunit protein bS16 (153 aa).

The segment at 114 to 153 (ENEPVGEAITPKKKKAKAEDAEAAADAPAEAAAESEAADK) is disordered. Low complexity predominate over residues 137 to 153 (AADAPAEAAAESEAADK).

The protein belongs to the bacterial ribosomal protein bS16 family.

This Rhodococcus jostii (strain RHA1) protein is Small ribosomal subunit protein bS16.